The chain runs to 309 residues: 5-oxoprolinase subunit C (309 aa).

The protein belongs to the PxpC family. In terms of assembly, forms a complex composed of PxpA, PxpB and PxpC.

The catalysed reaction is 5-oxo-L-proline + ATP + 2 H2O = L-glutamate + ADP + phosphate + H(+). Catalyzes the cleavage of 5-oxoproline to form L-glutamate coupled to the hydrolysis of ATP to ADP and inorganic phosphate. The sequence is that of 5-oxoprolinase subunit C from Haemophilus influenzae (strain ATCC 51907 / DSM 11121 / KW20 / Rd).